Consider the following 370-residue polypeptide: Phospho-N-acetylmuramoyl-pentapeptide-transferase (370 aa).

10 helical membrane passes run 3-23 (QIII…PVLI), 54-74 (GLAI…YGLL), 79-99 (AFTA…AVGF), 118-138 (AKLI…LRFP), 161-181 (LAVG…YILI), 197-217 (LAAG…FWQF), 238-258 (LAVL…WNAA), 262-282 (IFMG…ISVT), 290-310 (IIIG…IVVF), and 341-361 (FWLL…GDWL).

The protein belongs to the glycosyltransferase 4 family. MraY subfamily. The cofactor is Mg(2+).

The protein resides in the cell membrane. It catalyses the reaction UDP-N-acetyl-alpha-D-muramoyl-L-alanyl-gamma-D-glutamyl-meso-2,6-diaminopimeloyl-D-alanyl-D-alanine + di-trans,octa-cis-undecaprenyl phosphate = di-trans,octa-cis-undecaprenyl diphospho-N-acetyl-alpha-D-muramoyl-L-alanyl-D-glutamyl-meso-2,6-diaminopimeloyl-D-alanyl-D-alanine + UMP. Its pathway is cell wall biogenesis; peptidoglycan biosynthesis. Functionally, catalyzes the initial step of the lipid cycle reactions in the biosynthesis of the cell wall peptidoglycan: transfers peptidoglycan precursor phospho-MurNAc-pentapeptide from UDP-MurNAc-pentapeptide onto the lipid carrier undecaprenyl phosphate, yielding undecaprenyl-pyrophosphoryl-MurNAc-pentapeptide, known as lipid I. This chain is Phospho-N-acetylmuramoyl-pentapeptide-transferase, found in Corynebacterium aurimucosum (strain ATCC 700975 / DSM 44827 / CIP 107346 / CN-1) (Corynebacterium nigricans).